The primary structure comprises 340 residues: ATPase GET3 (340 aa).

An ATP-binding site is contributed by K35–T42. D64 is a catalytic residue. ATP contacts are provided by E245 and N272. Zn(2+)-binding residues include C283 and C286.

Belongs to the arsA ATPase family. As to quaternary structure, homodimer.

The protein resides in the cytoplasm. Its subcellular location is the endoplasmic reticulum. Functionally, ATPase required for the post-translational delivery of tail-anchored (TA) proteins to the endoplasmic reticulum. Recognizes and selectively binds the transmembrane domain of TA proteins in the cytosol. This complex then targets to the endoplasmic reticulum by membrane-bound receptors, where the tail-anchored protein is released for insertion. This process is regulated by ATP binding and hydrolysis. ATP binding drives the homodimer towards the closed dimer state, facilitating recognition of newly synthesized TA membrane proteins. ATP hydrolysis is required for insertion. Subsequently, the homodimer reverts towards the open dimer state, lowering its affinity for the membrane-bound receptor, and returning it to the cytosol to initiate a new round of targeting. This is ATPase GET3 from Chaetomium globosum (strain ATCC 6205 / CBS 148.51 / DSM 1962 / NBRC 6347 / NRRL 1970) (Soil fungus).